A 152-amino-acid chain; its full sequence is Transcriptional regulator MraZ (152 aa).

2 consecutive SpoVT-AbrB domains span residues 5–52 (ASAI…PIHE) and 81–124 (AHEV…DEQA).

Belongs to the MraZ family. Forms oligomers.

Its subcellular location is the cytoplasm. The protein localises to the nucleoid. This Shewanella sp. (strain ANA-3) protein is Transcriptional regulator MraZ.